A 335-amino-acid chain; its full sequence is Vitamin B12 import system permease protein BtuC (335 aa).

Helical transmembrane passes span Phe21 to Trp43, Phe63 to Val82, Gly95 to Phe114, Pro119 to Phe141, Leu153 to Thr175, Trp195 to Ser212, Phe244 to Val266, Thr281 to Leu303, and Val310 to Leu329.

The protein belongs to the binding-protein-dependent transport system permease family. FecCD subfamily. As to quaternary structure, the complex is composed of two ATP-binding proteins (BtuD), two transmembrane proteins (BtuC) and a solute-binding protein (BtuF).

It localises to the cell inner membrane. Part of the ABC transporter complex BtuCDF involved in vitamin B12 import. Involved in the translocation of the substrate across the membrane. The polypeptide is Vitamin B12 import system permease protein BtuC (Photorhabdus laumondii subsp. laumondii (strain DSM 15139 / CIP 105565 / TT01) (Photorhabdus luminescens subsp. laumondii)).